We begin with the raw amino-acid sequence, 283 residues long: Formamidopyrimidine-DNA glycosylase (283 aa).

P2 serves as the catalytic Schiff-base intermediate with DNA. Catalysis depends on E3, which acts as the Proton donor. K58 functions as the Proton donor; for beta-elimination activity in the catalytic mechanism. DNA is bound by residues H100, R119, and K162. Residues 247–283 (RVYGREGQRCQTPDCAEKILRKVQSGRSSFYCPACQR) form an FPG-type zinc finger. Catalysis depends on R273, which acts as the Proton donor; for delta-elimination activity.

This sequence belongs to the FPG family. As to quaternary structure, monomer. The cofactor is Zn(2+).

It catalyses the reaction Hydrolysis of DNA containing ring-opened 7-methylguanine residues, releasing 2,6-diamino-4-hydroxy-5-(N-methyl)formamidopyrimidine.. The catalysed reaction is 2'-deoxyribonucleotide-(2'-deoxyribose 5'-phosphate)-2'-deoxyribonucleotide-DNA = a 3'-end 2'-deoxyribonucleotide-(2,3-dehydro-2,3-deoxyribose 5'-phosphate)-DNA + a 5'-end 5'-phospho-2'-deoxyribonucleoside-DNA + H(+). Involved in base excision repair of DNA damaged by oxidation or by mutagenic agents. Acts as a DNA glycosylase that recognizes and removes damaged bases. Has a preference for oxidized purines, such as 7,8-dihydro-8-oxoguanine (8-oxoG). Has AP (apurinic/apyrimidinic) lyase activity and introduces nicks in the DNA strand. Cleaves the DNA backbone by beta-delta elimination to generate a single-strand break at the site of the removed base with both 3'- and 5'-phosphates. This Jannaschia sp. (strain CCS1) protein is Formamidopyrimidine-DNA glycosylase.